Here is a 201-residue protein sequence, read N- to C-terminus: NADH-quinone oxidoreductase subunit C 1 (201 aa).

It belongs to the complex I 30 kDa subunit family. As to quaternary structure, NDH-1 is composed of 14 different subunits. Subunits NuoB, C, D, E, F, and G constitute the peripheral sector of the complex.

The protein resides in the cell inner membrane. The catalysed reaction is a quinone + NADH + 5 H(+)(in) = a quinol + NAD(+) + 4 H(+)(out). Functionally, NDH-1 shuttles electrons from NADH, via FMN and iron-sulfur (Fe-S) centers, to quinones in the respiratory chain. The immediate electron acceptor for the enzyme in this species is believed to be ubiquinone. Couples the redox reaction to proton translocation (for every two electrons transferred, four hydrogen ions are translocated across the cytoplasmic membrane), and thus conserves the redox energy in a proton gradient. The protein is NADH-quinone oxidoreductase subunit C 1 of Rhizobium meliloti (strain 1021) (Ensifer meliloti).